We begin with the raw amino-acid sequence, 238 residues long: Large ribosomal subunit protein uL1 (238 aa).

Belongs to the universal ribosomal protein uL1 family. As to quaternary structure, part of the 50S ribosomal subunit.

Its function is as follows. Binds directly to 23S rRNA. The L1 stalk is quite mobile in the ribosome, and is involved in E site tRNA release. Functionally, protein L1 is also a translational repressor protein, it controls the translation of the L11 operon by binding to its mRNA. The sequence is that of Large ribosomal subunit protein uL1 from Rickettsia prowazekii (strain Madrid E).